The chain runs to 157 residues: ATP synthase subunit b (157 aa).

Residues 11 to 31 (LIMFAMFTWFCMKFIWPPIVM) form a helical membrane-spanning segment.

Belongs to the ATPase B chain family. F-type ATPases have 2 components, F(1) - the catalytic core - and F(0) - the membrane proton channel. F(1) has five subunits: alpha(3), beta(3), gamma(1), delta(1), epsilon(1). F(0) has three main subunits: a(1), b(2) and c(10-14). The alpha and beta chains form an alternating ring which encloses part of the gamma chain. F(1) is attached to F(0) by a central stalk formed by the gamma and epsilon chains, while a peripheral stalk is formed by the delta and b chains.

Its subcellular location is the cell inner membrane. Its function is as follows. F(1)F(0) ATP synthase produces ATP from ADP in the presence of a proton or sodium gradient. F-type ATPases consist of two structural domains, F(1) containing the extramembraneous catalytic core and F(0) containing the membrane proton channel, linked together by a central stalk and a peripheral stalk. During catalysis, ATP synthesis in the catalytic domain of F(1) is coupled via a rotary mechanism of the central stalk subunits to proton translocation. Functionally, component of the F(0) channel, it forms part of the peripheral stalk, linking F(1) to F(0). This Vesicomyosocius okutanii subsp. Calyptogena okutanii (strain HA) protein is ATP synthase subunit b.